The chain runs to 819 residues: DNA replication licensing factor Mcm3 (819 aa).

In terms of domain architecture, MCM spans 290 to 496 (IFELLSKSLA…DVDQMISDHV (207 aa)). Residues glutamine 348, leucine 388, glutamate 389, alanine 390, and alanine 392 each coordinate ADP. An Arginine finger motif is present at residues 472–475 (SRFD). At serine 522 the chain carries Phosphoserine. A Phosphotyrosine modification is found at tyrosine 538. Residues 655-717 (DRPSKRRRNS…DAGDLTRRET (63 aa)) are disordered. A phosphoserine mark is found at serine 664, serine 666, serine 680, and serine 682. A phosphothreonine mark is found at threonine 690 and threonine 692. A phosphoserine mark is found at serine 697, serine 735, and serine 739.

Belongs to the MCM family. As to quaternary structure, component of the Mcm2-7 complex. The complex forms a toroidal hexameric ring with the proposed subunit order Mcm2-Mcm6-Mcm4-Mcm7-Mcm3-Mcm5.

It localises to the nucleus. The protein resides in the chromosome. The enzyme catalyses ATP + H2O = ADP + phosphate + H(+). Acts as a component of the Mcm2-7 complex (Mcm complex) (Mcm complex) which is the putative replicative helicase essential for 'once per cell cycle' DNA replication initiation and elongation in eukaryotic cells. Core component of CDC45-MCM-GINS (CMG) helicase, the molecular machine that unwinds template DNA during replication, and around which the replisome is built. The active ATPase sites in the Mcm2-7 ring are formed through the interaction surfaces of two neighboring subunits such that a critical structure of a conserved arginine finger motif is provided in trans relative to the ATP-binding site of the Walker A box of the adjacent subunit. The six ATPase active sites, however, are likely to contribute differentially to the complex helicase activity. The polypeptide is DNA replication licensing factor Mcm3 (Mcm3) (Drosophila melanogaster (Fruit fly)).